Here is an 86-residue protein sequence, read N- to C-terminus: RNA-binding protein Hfq (86 aa).

One can recognise a Sm domain in the interval 9–68; that stretch reads DPYLNTLRKEKVGVSIYLVNGIKLQGTIESFDQFVILLKNTVSQMVYKHAISTVVPVRPI.

It belongs to the Hfq family. As to quaternary structure, homohexamer.

Its function is as follows. RNA chaperone that binds small regulatory RNA (sRNAs) and mRNAs to facilitate mRNA translational regulation in response to envelope stress, environmental stress and changes in metabolite concentrations. Also binds with high specificity to tRNAs. The chain is RNA-binding protein Hfq from Pseudomonas fluorescens (strain Pf0-1).